Consider the following 193-residue polypeptide: dCTP deaminase, dUMP-forming (193 aa).

Residues 101-106 (KSSLGR), Asp119, 127-129 (TLE), Gln148, Tyr162, and Gln174 each bind dCTP. The active-site Proton donor/acceptor is Glu129. Positions 162–184 (YGSKGTGSHYQGQRGPTPSRSYE) are disordered. Residues 167–183 (TGSHYQGQRGPTPSRSY) are compositionally biased toward polar residues.

The protein belongs to the dCTP deaminase family. As to quaternary structure, homotrimer.

It carries out the reaction dCTP + 2 H2O = dUMP + NH4(+) + diphosphate. It functions in the pathway pyrimidine metabolism; dUMP biosynthesis; dUMP from dCTP: step 1/1. Functionally, bifunctional enzyme that catalyzes both the deamination of dCTP to dUTP and the hydrolysis of dUTP to dUMP without releasing the toxic dUTP intermediate. This is dCTP deaminase, dUMP-forming from Bifidobacterium longum (strain DJO10A).